The following is a 95-amino-acid chain: Aspartyl/glutamyl-tRNA(Asn/Gln) amidotransferase subunit C (95 aa).

This sequence belongs to the GatC family. In terms of assembly, heterotrimer of A, B and C subunits.

The enzyme catalyses L-glutamyl-tRNA(Gln) + L-glutamine + ATP + H2O = L-glutaminyl-tRNA(Gln) + L-glutamate + ADP + phosphate + H(+). The catalysed reaction is L-aspartyl-tRNA(Asn) + L-glutamine + ATP + H2O = L-asparaginyl-tRNA(Asn) + L-glutamate + ADP + phosphate + 2 H(+). Its function is as follows. Allows the formation of correctly charged Asn-tRNA(Asn) or Gln-tRNA(Gln) through the transamidation of misacylated Asp-tRNA(Asn) or Glu-tRNA(Gln) in organisms which lack either or both of asparaginyl-tRNA or glutaminyl-tRNA synthetases. The reaction takes place in the presence of glutamine and ATP through an activated phospho-Asp-tRNA(Asn) or phospho-Glu-tRNA(Gln). The sequence is that of Aspartyl/glutamyl-tRNA(Asn/Gln) amidotransferase subunit C from Prosthecochloris aestuarii (strain DSM 271 / SK 413).